A 397-amino-acid polypeptide reads, in one-letter code: 1-deoxy-D-xylulose 5-phosphate reductoisomerase (397 aa).

Residues Thr-12, Gly-13, Ser-14, Ile-15, Gly-38, Lys-39, Asn-40, and Asn-126 each coordinate NADPH. Position 127 (Lys-127) interacts with 1-deoxy-D-xylulose 5-phosphate. Glu-128 contacts NADPH. A Mn(2+)-binding site is contributed by Asp-152. Positions 153, 154, 188, and 211 each coordinate 1-deoxy-D-xylulose 5-phosphate. Residue Glu-154 participates in Mn(2+) binding. An NADPH-binding site is contributed by Gly-217. 1-deoxy-D-xylulose 5-phosphate-binding residues include Ser-224, Asn-229, Lys-230, and Glu-233. A Mn(2+)-binding site is contributed by Glu-233.

It belongs to the DXR family. The cofactor is Mg(2+). It depends on Mn(2+) as a cofactor.

The enzyme catalyses 2-C-methyl-D-erythritol 4-phosphate + NADP(+) = 1-deoxy-D-xylulose 5-phosphate + NADPH + H(+). The protein operates within isoprenoid biosynthesis; isopentenyl diphosphate biosynthesis via DXP pathway; isopentenyl diphosphate from 1-deoxy-D-xylulose 5-phosphate: step 1/6. Catalyzes the NADPH-dependent rearrangement and reduction of 1-deoxy-D-xylulose-5-phosphate (DXP) to 2-C-methyl-D-erythritol 4-phosphate (MEP). In Haemophilus influenzae (strain PittEE), this protein is 1-deoxy-D-xylulose 5-phosphate reductoisomerase.